A 567-amino-acid chain; its full sequence is Urease subunit alpha (567 aa).

In terms of domain architecture, Urease spans 129-567 (GGIDTHIHFI…LPMAQRYFLF (439 aa)). Residues His-134, His-136, and Lys-217 each contribute to the Ni(2+) site. Lys-217 is modified (N6-carboxylysine). His-219 is a substrate binding site. His-246 and His-272 together coordinate Ni(2+). The active-site Proton donor is His-320. Asp-360 provides a ligand contact to Ni(2+).

The protein belongs to the metallo-dependent hydrolases superfamily. Urease alpha subunit family. Heterotrimer of UreA (gamma), UreB (beta) and UreC (alpha) subunits. Three heterotrimers associate to form the active enzyme. It depends on Ni cation as a cofactor. Post-translationally, carboxylation allows a single lysine to coordinate two nickel ions.

The protein resides in the cytoplasm. It catalyses the reaction urea + 2 H2O + H(+) = hydrogencarbonate + 2 NH4(+). It functions in the pathway nitrogen metabolism; urea degradation; CO(2) and NH(3) from urea (urease route): step 1/1. The chain is Urease subunit alpha from Delftia acidovorans (strain DSM 14801 / SPH-1).